The chain runs to 584 residues: Tricyclene synthase 1e20, chloroplastic (584 aa).

The transit peptide at 1 to 45 (MIYIWICFYLQTTLLPCSLSTRTKFAICHNTSKLHRAAYKTSRWN) directs the protein to the chloroplast. N-linked (GlcNAc...) asparagine glycans are attached at residues asparagine 30, asparagine 209, and asparagine 322. The Mg(2+) site is built by aspartate 341 and aspartate 345. Positions 341-345 (DDIFD) match the DDXXD motif motif. Asparagine 387 and asparagine 468 each carry an N-linked (GlcNAc...) asparagine glycan. Mg(2+)-binding residues include asparagine 485, serine 489, and glutamate 493. Residue asparagine 512 is glycosylated (N-linked (GlcNAc...) asparagine).

This sequence belongs to the terpene synthase family. Tpsg subfamily. The cofactor is Mg(2+). Mn(2+) serves as cofactor. In terms of tissue distribution, accumulates at low levels in flowers; mostly expressed in both upper and lower petal lobes, and, to a lower extent, in tube and stamens.

The protein resides in the plastid. It is found in the chloroplast stroma. It carries out the reaction (2E)-geranyl diphosphate = tricyclene + diphosphate. The catalysed reaction is (2E)-geranyl diphosphate = beta-myrcene + diphosphate. It participates in secondary metabolite biosynthesis; terpenoid biosynthesis. Functionally, may contribute to floral scent emission. In Antirrhinum majus (Garden snapdragon), this protein is Tricyclene synthase 1e20, chloroplastic (1e20).